The sequence spans 81 residues: Toxin F-VIII (81 aa).

Residues 1–21 (MKTLLLTLLVVTIVCLDLAST) form the signal peptide. Disulfide bonds link cysteine 24–cysteine 43, cysteine 38–cysteine 60, cysteine 62–cysteine 73, and cysteine 74–cysteine 79.

The protein belongs to the three-finger toxin family. Short-chain subfamily. Orphan group XI sub-subfamily. Expressed by the venom gland.

It localises to the secreted. Functionally, is cytotoxic against A549 cells (LC(50)=106 ug/ml). The polypeptide is Toxin F-VIII (Dendroaspis angusticeps (Eastern green mamba)).